The chain runs to 243 residues: Small ribosomal subunit protein uS5 (243 aa).

Over residues 1-10 the composition is skewed to basic and acidic residues; it reads MSDNETKETQ. Positions 1 to 50 are disordered; sequence MSDNETKETQVAEETQNTVATESNNEDRKGRRGQRGEGRRGERRNRREEN. Polar residues predominate over residues 12-23; sequence AEETQNTVATES. Positions 25–50 are enriched in basic and acidic residues; that stretch reads NEDRKGRRGQRGEGRRGERRNRREEN. In terms of domain architecture, S5 DRBM spans 55 to 118; it reads LLDRVVTINR…LDAKKHMFSV (64 aa).

The protein belongs to the universal ribosomal protein uS5 family. Part of the 30S ribosomal subunit. Contacts proteins S4 and S8.

Functionally, with S4 and S12 plays an important role in translational accuracy. Its function is as follows. Located at the back of the 30S subunit body where it stabilizes the conformation of the head with respect to the body. The protein is Small ribosomal subunit protein uS5 of Bifidobacterium longum (strain DJO10A).